Here is a 384-residue protein sequence, read N- to C-terminus: Probable L-aspartate decarboxylase (384 aa).

Lys-233 carries the post-translational modification N6-(pyridoxal phosphate)lysine.

It belongs to the group II decarboxylase family. MfnA subfamily. Requires pyridoxal 5'-phosphate as cofactor.

The enzyme catalyses L-aspartate + H(+) = beta-alanine + CO2. Its pathway is cofactor biosynthesis; coenzyme A biosynthesis. In terms of biological role, catalyzes the decarboxylation of L-aspartate to produce beta-alanine. This Pyrococcus abyssi (strain GE5 / Orsay) protein is Probable L-aspartate decarboxylase.